The primary structure comprises 412 residues: Ribosomal RNA large subunit methyltransferase G (412 aa).

Positions 386-412 (KAEPHENGESSSDTPNPQSSLYGGVKR) are disordered. The span at 394 to 406 (ESSSDTPNPQSSL) shows a compositional bias: polar residues.

It belongs to the methyltransferase superfamily. RlmG family.

Its subcellular location is the cytoplasm. It carries out the reaction guanosine(1835) in 23S rRNA + S-adenosyl-L-methionine = N(2)-methylguanosine(1835) in 23S rRNA + S-adenosyl-L-homocysteine + H(+). Functionally, specifically methylates the guanine in position 1835 (m2G1835) of 23S rRNA. In Shewanella sediminis (strain HAW-EB3), this protein is Ribosomal RNA large subunit methyltransferase G.